The chain runs to 110 residues: uncharacterized protein (110 aa).

Residues 1–16 (MSVKLKYDKIDQRNGD) show a composition bias toward basic and acidic residues. 2 disordered regions span residues 1–29 (MSVK…GNGN) and 73–100 (IKQQ…ESPN). A compositionally biased stretch (low complexity) spans 20–29 (GNHNNCGNGN).

This is an uncharacterized protein from Dictyostelium discoideum (Social amoeba).